The following is a 166-amino-acid chain: Cytochrome c-type biogenesis protein CcmE (166 aa).

Over 1-13 (MNFLPKSRKARRR) the chain is Cytoplasmic. A helical; Signal-anchor for type II membrane protein membrane pass occupies residues 14-34 (LTILAVAAPVVALAVGLALWG). Over 35–166 (MRDAISLFYT…QGYKPGKPNT (132 aa)) the chain is Periplasmic. Heme is bound by residues histidine 128 and tyrosine 132. The interval 143 to 166 (EQGEWRGDGQAPSYQGYKPGKPNT) is disordered.

This sequence belongs to the CcmE/CycJ family.

The protein localises to the cell inner membrane. In terms of biological role, heme chaperone required for the biogenesis of c-type cytochromes. Transiently binds heme delivered by CcmC and transfers the heme to apo-cytochromes in a process facilitated by CcmF and CcmH. In Caulobacter sp. (strain K31), this protein is Cytochrome c-type biogenesis protein CcmE.